A 609-amino-acid polypeptide reads, in one-letter code: Glutamine--fructose-6-phosphate aminotransferase [isomerizing] (609 aa).

The Nucleophile; for GATase activity role is filled by Cys-2. The Glutamine amidotransferase type-2 domain maps to 2 to 219 (CGIFGYLGNQ…SGEFAIVSQG (218 aa)). 2 consecutive SIS domains span residues 285–426 (LSDV…VHGA) and 458–599 (WAQP…IDCP). The active-site For Fru-6P isomerization activity is Lys-604.

Homodimer.

The protein localises to the cytoplasm. The catalysed reaction is D-fructose 6-phosphate + L-glutamine = D-glucosamine 6-phosphate + L-glutamate. Catalyzes the first step in hexosamine metabolism, converting fructose-6P into glucosamine-6P using glutamine as a nitrogen source. This is Glutamine--fructose-6-phosphate aminotransferase [isomerizing] from Chlamydia pneumoniae (Chlamydophila pneumoniae).